We begin with the raw amino-acid sequence, 158 residues long: Extracellular giant hemoglobin major globin subunit A2 (158 aa).

Positions 1–16 (MKSLIVFACLVAYAAA) are cleaved as a signal peptide. In terms of domain architecture, Globin spans 17–158 (DCTSLNRLLV…MNQIVSGISG (142 aa)). The cysteines at positions 18 and 148 are disulfide-linked. Position 89 (C89) interacts with hydrogen sulfide. A heme b-binding site is contributed by H110.

Belongs to the globin family. The 400 kDa hemoglobin consists of a spherical 24-mer arranged as a double layer of dome-shaped dodecamers. Each dodecamer is composed of the 3-fold trimer of the tetramer A1-A2-B1-B2 having one intra-tetramer (A1-B2) disulfide bond and one inter-tetramer (B1-B2) disulfide bond per tetramer.

Its subcellular location is the secreted. Functionally, the extracellular giant hemoglobin is able to bind and transport oxygen and hydrosulfide simultaneously and reversibly at two different sites. The polypeptide is Extracellular giant hemoglobin major globin subunit A2 (ghbA2) (Oligobrachia mashikoi (Beard worm)).